Here is a 36-residue protein sequence, read N- to C-terminus: Photosystem I reaction center subunit VIII (36 aa).

The helical transmembrane segment at 9-29 (ILTPVVTLVFPGLMFALFFVL) threads the bilayer.

The protein belongs to the PsaI family.

The protein localises to the plastid. The protein resides in the chloroplast thylakoid membrane. Its function is as follows. May help in the organization of the PsaL subunit. The chain is Photosystem I reaction center subunit VIII from Emiliania huxleyi (Coccolithophore).